A 465-amino-acid polypeptide reads, in one-letter code: ATP-dependent protease ATPase subunit HslU (465 aa).

Residues Val-19, 61-66 (GVGKTE), Asp-277, Glu-343, and Arg-415 contribute to the ATP site.

This sequence belongs to the ClpX chaperone family. HslU subfamily. A double ring-shaped homohexamer of HslV is capped on each side by a ring-shaped HslU homohexamer. The assembly of the HslU/HslV complex is dependent on binding of ATP.

Its subcellular location is the cytoplasm. Its function is as follows. ATPase subunit of a proteasome-like degradation complex; this subunit has chaperone activity. The binding of ATP and its subsequent hydrolysis by HslU are essential for unfolding of protein substrates subsequently hydrolyzed by HslV. HslU recognizes the N-terminal part of its protein substrates and unfolds these before they are guided to HslV for hydrolysis. The protein is ATP-dependent protease ATPase subunit HslU of Geobacillus sp. (strain WCH70).